Here is a 325-residue protein sequence, read N- to C-terminus: Probable 2-ketogluconate reductase (325 aa).

Residues arginine 158–isoleucine 159, threonine 211, isoleucine 238–arginine 240, and aspartate 264 contribute to the NAD(+) site. The active site involves arginine 240. The active site involves glutamate 269. Histidine 288 functions as the Proton donor in the catalytic mechanism. Position 288 to 291 (histidine 288 to serine 291) interacts with NAD(+).

The protein belongs to the D-isomer specific 2-hydroxyacid dehydrogenase family.

It catalyses the reaction D-gluconate + NADP(+) = 2-dehydro-D-gluconate + NADPH + H(+). The polypeptide is Probable 2-ketogluconate reductase (yvcT) (Bacillus subtilis (strain 168)).